Here is a 162-residue protein sequence, read N- to C-terminus: NADH-quinone oxidoreductase subunit I (162 aa).

4Fe-4S ferredoxin-type domains are found at residues 53-83 and 93-122; these read LRRY…IESE and TRYD…ETRV. Residues C63, C66, C69, C73, C102, C105, C108, and C112 each coordinate [4Fe-4S] cluster.

It belongs to the complex I 23 kDa subunit family. As to quaternary structure, NDH-1 is composed of 14 different subunits. Subunits NuoA, H, J, K, L, M, N constitute the membrane sector of the complex. [4Fe-4S] cluster serves as cofactor.

Its subcellular location is the cell inner membrane. It catalyses the reaction a quinone + NADH + 5 H(+)(in) = a quinol + NAD(+) + 4 H(+)(out). Functionally, NDH-1 shuttles electrons from NADH, via FMN and iron-sulfur (Fe-S) centers, to quinones in the respiratory chain. The immediate electron acceptor for the enzyme in this species is believed to be ubiquinone. Couples the redox reaction to proton translocation (for every two electrons transferred, four hydrogen ions are translocated across the cytoplasmic membrane), and thus conserves the redox energy in a proton gradient. The polypeptide is NADH-quinone oxidoreductase subunit I (Nitrosomonas europaea (strain ATCC 19718 / CIP 103999 / KCTC 2705 / NBRC 14298)).